We begin with the raw amino-acid sequence, 697 residues long: Potassium channel KAT2 (697 aa).

Topologically, residues 1–63 (MSISCTRNFF…PFDPRFRGWE (63 aa)) are cytoplasmic. A helical membrane pass occupies residues 64–84 (MWLVILVIYSAWICPFEFAFI). The Extracellular portion of the chain corresponds to 85-91 (TYKKDAL). The chain crosses the membrane as a helical span at residues 92–112 (FIIDNIVNGFFAIDIILTFFV). At 113–134 (AYLDSHSYLLVDKPKKIAIRYL) the chain is on the cytoplasmic side. A helical membrane pass occupies residues 135 to 155 (STWFAFDVCSTAPFQSLSLLF). The Extracellular segment spans residues 156-165 (KYNGSEIGFR). An N-linked (GlcNAc...) asparagine glycan is attached at asparagine 158. A helical; Voltage-sensor membrane pass occupies residues 166-186 (VLSMLRLWRLRRVSSLFARLE). Topologically, residues 187–200 (KDIRFNYFWTRCTK) are cytoplasmic. Residues 201-221 (LISVTLFAVHCAGCFAYLIAD) form a helical membrane-spanning segment. The Extracellular segment spans residues 222–248 (QYHDPTKTWIGAVYPNFKETSVWSRYV). The pore-forming intramembrane region spans 249–268 (TALYWSITTLTTTGYGDLHA). Topologically, residues 269-272 (ENPR) are extracellular. Residues 273 to 293 (EMLFFVFFMLFNLGFTSYLIG) traverse the membrane as a helical segment. Topologically, residues 294 to 697 (NMTNLVVHWT…HLYILINENS (404 aa)) are cytoplasmic. 377–496 (LFHGVSRNFL…RVIMNNLFMK (120 aa)) is a binding site for a nucleoside 3',5'-cyclic phosphate. The KHA domain occupies 629 to 697 (RVTIHLKSRD…HLYILINENS (69 aa)).

The protein belongs to the potassium channel family. Plant (TC 1.A.1.4) subfamily. In terms of assembly, the potassium channel is probably composed of a homo- or heterotetrameric complex of pore-forming subunits. May interact with KAT1. Interacts with SLAC1. Expressed in guard cells of hypocotyls, stems leaves and petioles. Detected also in the phloem of minor veins and in flower at a lower level.

The protein localises to the membrane. Highly selective inward-rectifying potassium channel. This voltage-dependent channel could mediate long-term potassium influx into guard cells leading to stomatal opening. Assuming opened or closed conformations in response to the voltage difference across the membrane, the channel is activated by hyperpolarization. The channel activity is enhanced upon external acidification. This Arabidopsis thaliana (Mouse-ear cress) protein is Potassium channel KAT2 (KAT2).